Consider the following 1782-residue polypeptide: A-kinase anchor protein 12 (1782 aa).

Disordered regions lie at residues 1-53 (MGAG…DPAT), 71-169 (QDEL…QAND), 189-400 (KTEK…APLA), 421-886 (VSTV…ELSE), 938-1089 (EREV…LKKE), 1105-1134 (PFTQ…ESSE), 1157-1274 (AIPP…ADEK), and 1305-1355 (KGEG…HVNE). The N-myristoyl glycine moiety is linked to residue G2. Phosphoserine occurs at positions 11, 19, 28, 75, and 96. A compositionally biased stretch (low complexity) spans 16 to 53 (PEGSSTPAEPEPSGGGPSAEAAPDTTADPAIAASDPAT). Basic and acidic residues predominate over residues 108–125 (GQRDSEDVSKRDSDKEMA). Residues 145-154 (IIEQIPSSES) show a composition bias toward low complexity. S154 carries the phosphoserine modification. A compositionally biased stretch (polar residues) spans 157-168 (EELTQPTESQAN). Residues S219, S248, S258, S280, S283, S286, S347, and S371 each carry the phosphoserine modification. Residues 226 to 249 (ASKESEPKQSTEKPEETLKREQSH) show a composition bias toward basic and acidic residues. Residues 266–557 (KEEGEEKQEK…TQVPADSPDS (292 aa)) are involved in PKC-binding. Basic and acidic residues-rich tracts occupy residues 315 to 347 (KPKE…EVAS) and 363 to 379 (ESAH…KVEL). Y374 bears the Phosphotyrosine mark. A phosphoserine mark is found at S381 and S392. Residues 423 to 435 (TVEERTEEQKTEV) are compositionally biased toward basic and acidic residues. Positions 446–456 (ELVEMDAEPQE) are enriched in acidic residues. Over residues 458-468 (EPAKELVKLKE) the composition is skewed to basic and acidic residues. 2 positions are modified to phosphoserine: S483 and S505. The segment covering 528–537 (LSGKKQKGKR) has biased composition (basic residues). A phosphoserine mark is found at S554, S557, S598, S612, S627, and S629. The short motif at 607-627 (VTPWASFKKMVTPKKRVRRPS) is the AKAP CaM-binding 1 element. Residues 625-639 (RPSESDKEDELDKVK) are compositionally biased toward basic and acidic residues. A compositionally biased stretch (low complexity) spans 640-652 (SATLSSTESTASE). A Phosphothreonine modification is found at T642. A phosphoserine mark is found at S644, S645, S648, and S651. The segment covering 655 to 674 (EEMKGSVEEPKPEEPKRKVD) has biased composition (basic and acidic residues). Residues S696, S697, and S698 each carry the phosphoserine modification. Basic and acidic residues predominate over residues 708–724 (GGDHQKADEAGKDKETG). A compositionally biased stretch (polar residues) spans 739–749 (QGSSSPEQAGS). 3 positions are modified to phosphoserine: S749, S761, and S787. The AKAP CaM-binding 2 signature appears at 756-776 (VSTWESFKRLVTPRKKSKSKL). A compositionally biased stretch (basic and acidic residues) spans 792–803 (STPDTEPGKEES). Positions 801 to 821 (EESWVSIKKFIPGRRKKRPDG) match the AKAP CaM-binding 3 motif. A Phosphoserine modification is found at S806. Residues 986-997 (GAEEGTEASAAE) show a composition bias toward low complexity. A Glycyl lysine isopeptide (Lys-Gly) (interchain with G-Cter in SUMO1) cross-link involves residue K1051. A compositionally biased stretch (basic and acidic residues) spans 1072-1089 (AEAERPEEQAEASGLKKE). Residues 1164–1174 (ETPTDSETDGS) are compositionally biased toward polar residues. 2 stretches are compositionally biased toward basic and acidic residues: residues 1187–1198 (QKDEIVEIHEEN) and 1231–1251 (EETK…KEVS). Over residues 1253-1267 (ETVSILSKTEGTQEA) the composition is skewed to polar residues. Phosphoserine occurs at positions 1328 and 1331. A compositionally biased stretch (basic and acidic residues) spans 1333–1355 (VEREMVVQVEREKTEAEPTHVNE). A phosphoserine mark is found at S1391 and S1395. Residues 1541-1554 (ELETKSSKLVQNII) are RII-binding. Residues 1584 to 1782 (KADSQDAGQE…ESAKSELTES (199 aa)) are disordered. S1587 carries the post-translational modification Phosphoserine. Residues 1603 to 1612 (ASAQDETPIT) show a composition bias toward polar residues. 2 stretches are compositionally biased toward basic and acidic residues: residues 1629–1639 (DISKDMSEASE) and 1675–1699 (VPED…KEDE). S1727 is modified (phosphoserine). Basic and acidic residues-rich tracts occupy residues 1734–1757 (KQKE…ESDK) and 1766–1782 (ELQK…LTES).

As to quaternary structure, binds to dimeric RII-alpha regulatory subunit of PKC. As to expression, expressed in endothelial cells, cultured fibroblasts and osteosarcoma, but not in platelets, leukocytes, monocytic cell lines or peripherical blood cells.

It localises to the cytoplasm. The protein localises to the cell cortex. It is found in the cytoskeleton. Its subcellular location is the membrane. Its function is as follows. Anchoring protein that mediates the subcellular compartmentation of protein kinase A (PKA) and protein kinase C (PKC). The chain is A-kinase anchor protein 12 (AKAP12) from Homo sapiens (Human).